A 240-amino-acid polypeptide reads, in one-letter code: (DL)-glycerol-3-phosphatase 2 (240 aa).

The active-site Nucleophile is aspartate 20. Residues aspartate 20, aspartate 22, and aspartate 185 each coordinate Mg(2+). Catalysis depends on aspartate 22, which acts as the Proton donor.

This sequence belongs to the HAD-like hydrolase superfamily. DOG/GPP family. Mg(2+) serves as cofactor. As to expression, ubiquitous with highest expression in siliques. Mainly restricted to the meristem of immature flower and vascular elements of the root, shoot, leave, siliqua and developing embryo (at the protein level).

It localises to the cytoplasm. The enzyme catalyses sn-glycerol 1-phosphate + H2O = glycerol + phosphate. It catalyses the reaction sn-glycerol 3-phosphate + H2O = glycerol + phosphate. Functionally, acts as a glycerol-3-phosphatase with higher stereospecificity for L-glycerol-3-phosphate than DL-glycerol-3-phosphate. This is (DL)-glycerol-3-phosphatase 2 (GPP2) from Arabidopsis thaliana (Mouse-ear cress).